A 501-amino-acid chain; its full sequence is Aldehyde dehydrogenase, cytosolic 1 (501 aa).

246–251 is a binding site for NAD(+); it reads GSTEVG. E269 (proton acceptor) is an active-site residue. C303 serves as the catalytic Nucleophile.

The protein belongs to the aldehyde dehydrogenase family. In terms of assembly, homotetramer. In terms of tissue distribution, eye specific, with very high expression in the lens.

It is found in the cytoplasm. It catalyses the reaction an aldehyde + NAD(+) + H2O = a carboxylate + NADH + 2 H(+). Its pathway is alcohol metabolism; ethanol degradation; acetate from ethanol: step 2/2. In terms of biological role, major component of the eye of elephant shrews, which in contrast to other mammals, possesses both a lens- and a non-lens class-1 aldehyde dehydrogenase 1. This eye-specific form is a structural protein of the lens and, in other part of the eye, serves as the major form of ALDH1. Can convert/oxidize retinaldehyde to retinoic acid. The protein is Aldehyde dehydrogenase, cytosolic 1 (ALDH1) of Elephantulus edwardii (Cape long-eared elephant shrew).